We begin with the raw amino-acid sequence, 235 residues long: Large ribosomal subunit protein bL25 (235 aa).

The disordered stretch occupies residues 201–235; that stretch reads PVAEAKGKGKAAKPAATAKPAAAAAKPAAKPKAKK. The segment covering 212–228 has biased composition (low complexity); sequence AKPAATAKPAAAAAKPA.

It belongs to the bacterial ribosomal protein bL25 family. CTC subfamily. As to quaternary structure, part of the 50S ribosomal subunit; part of the 5S rRNA/L5/L18/L25 subcomplex. Contacts the 5S rRNA. Binds to the 5S rRNA independently of L5 and L18.

Functionally, this is one of the proteins that binds to the 5S RNA in the ribosome where it forms part of the central protuberance. The polypeptide is Large ribosomal subunit protein bL25 (Verminephrobacter eiseniae (strain EF01-2)).